Reading from the N-terminus, the 115-residue chain is Ustilagic acid biosynthesis cluster protein orf3 (115 aa).

Positions 1 to 38 (MTYSKIACSLGKRGIARAPNQASSFFLLLFLFAKFSQQ) are cleaved as a signal peptide. The tract at residues 42–62 (SPCLASSGVAKSRGPASTDRP) is disordered.

It participates in secondary metabolite biosynthesis. Functionally, part of the gene cluster that mediates the biosynthesis of the glycolipid biosurfactant ustilagic acid (UA). UA is a secreted cellobiose glycolipid that is toxic for many microorganisms and confers biocontrol activity to U.maydis. UA consists of 15,16-dihydroxypalmitic or 2,15,16-trihydroxypalmitic acid, which is O-glycosidically linked to cellobiose at its terminal hydroxyl group. In addition, the cellobiose moiety is acetylated and acylated with a short-chain hydroxy fatty acid. UA biosynthesis starts with omega-hydroxylation of palmitic acid catalyzed by the cytochrome P450 monooxygenase cyp1. Terminal hydroxylation of palmitic acid precedes subterminal hydroxylation catalyzed by the cytochrome P450 monooxygenase cyp2. Sequential glucosylation of the hydroxy fatty acid is probably catalyzed by the glycosyltransferase ugt1. The cellobiose lipid is further decorated by acetylation of the proximal glucose residue and by acylation with a short-chain beta-hydroxy fatty acid at the distal glucose residue. The acyltransferase uat1 may be a good candidate for catalyzing either acetylation or acylation of the cellobiose lipid. The fatty acid synthase fas2 may be involved in synthesis of the carbon backbone of the short-chain beta-hydroxy fatty acid esterified to the cellobiose disaccharide. The secreted UA consists of a mixture of both alpha-hydroxylated and non-hydroxylated glycolipids; therefore, alpha-hydroxylation of the long-chain fatty, catalyzed by the fatty acid hydroxylase ahd1, occurs late in UA biosynthesis and may be the last step before secretion. This Mycosarcoma maydis (Corn smut fungus) protein is Ustilagic acid biosynthesis cluster protein orf3.